Reading from the N-terminus, the 506-residue chain is Lysine--tRNA ligase (506 aa).

Mg(2+)-binding residues include E416 and E423.

Belongs to the class-II aminoacyl-tRNA synthetase family. In terms of assembly, homodimer. Mg(2+) serves as cofactor.

It is found in the cytoplasm. The catalysed reaction is tRNA(Lys) + L-lysine + ATP = L-lysyl-tRNA(Lys) + AMP + diphosphate. The polypeptide is Lysine--tRNA ligase (Xylella fastidiosa (strain M23)).